The primary structure comprises 98 residues: MDPNQTNVVPPALHLVDPQIQLTITRMEDAMGQGQNSADPKVYPIILRLGSQLSLSMARRNLDSLEARAFQSTPIVVQMTKLATTEELPDEFVVVTAK.

The 9b domain maps to 9-98 (VPPALHLVDP…PDEFVVVTAK (90 aa)). Residues 46–54 (ILRLGSQLS) carry the Nuclear export signal motif.

The protein belongs to the coronavirus group 2 protein 9b family. In terms of assembly, homodimer. Interacts with host XPO1; this interaction mediates protein ORF9b export out of the nucleus. Interacts with host MAVS. Interacts with protein ORF6.

The protein resides in the virion. Its subcellular location is the host cytoplasmic vesicle membrane. It is found in the host cytoplasm. The protein localises to the host endoplasmic reticulum. It localises to the host nucleus. The protein resides in the host mitochondrion. Its function is as follows. Plays a role in the inhibition of host innate immune response by targeting the mitochondrial-associated adapter MAVS. Mechanistically, usurps the E3 ligase ITCH to trigger the degradation of MAVS, TRAF3, and TRAF6. In addition, causes mitochondrial elongation by triggering ubiquitination and proteasomal degradation of dynamin-like protein 1/DNM1L. This is ORF9b protein from Homo sapiens (Human).